The chain runs to 693 residues: DNA ligase (693 aa).

Residues 45–49 (DSEYD), 94–95 (SI), and glutamate 131 each bind NAD(+). Lysine 133 functions as the N6-AMP-lysine intermediate in the catalytic mechanism. The NAD(+) site is built by arginine 154, glutamate 190, lysine 307, and lysine 331. Zn(2+) is bound by residues cysteine 429, cysteine 432, cysteine 447, and cysteine 453. The 79-residue stretch at 615-693 (ASSSKLEGKT…EEGLLSLLAE (79 aa)) folds into the BRCT domain.

The protein belongs to the NAD-dependent DNA ligase family. LigA subfamily. Mg(2+) is required as a cofactor. Mn(2+) serves as cofactor.

The catalysed reaction is NAD(+) + (deoxyribonucleotide)n-3'-hydroxyl + 5'-phospho-(deoxyribonucleotide)m = (deoxyribonucleotide)n+m + AMP + beta-nicotinamide D-nucleotide.. Functionally, DNA ligase that catalyzes the formation of phosphodiester linkages between 5'-phosphoryl and 3'-hydroxyl groups in double-stranded DNA using NAD as a coenzyme and as the energy source for the reaction. It is essential for DNA replication and repair of damaged DNA. The protein is DNA ligase of Methylobacillus flagellatus (strain ATCC 51484 / DSM 6875 / VKM B-1610 / KT).